A 374-amino-acid chain; its full sequence is 8-amino-7-oxononanoate synthase (374 aa).

Residues Arg22 and Arg29 each contribute to the substrate site. 109 to 110 (GY) is a binding site for pyridoxal 5'-phosphate. His134 contributes to the substrate binding site. Residues Ser182, 207–210 (DDAH), and 227–230 (TLSK) contribute to the pyridoxal 5'-phosphate site. The residue at position 230 (Lys230) is an N6-(pyridoxal phosphate)lysine. Thr339 serves as a coordination point for substrate.

Belongs to the class-II pyridoxal-phosphate-dependent aminotransferase family. BioF subfamily. In terms of assembly, homodimer. It depends on pyridoxal 5'-phosphate as a cofactor.

It carries out the reaction 6-carboxyhexanoyl-[ACP] + L-alanine + H(+) = (8S)-8-amino-7-oxononanoate + holo-[ACP] + CO2. Its pathway is cofactor biosynthesis; biotin biosynthesis. In terms of biological role, catalyzes the decarboxylative condensation of pimeloyl-[acyl-carrier protein] and L-alanine to produce 8-amino-7-oxononanoate (AON), [acyl-carrier protein], and carbon dioxide. The protein is 8-amino-7-oxononanoate synthase of Methylobacterium radiotolerans (strain ATCC 27329 / DSM 1819 / JCM 2831 / NBRC 15690 / NCIMB 10815 / 0-1).